Here is an 813-residue protein sequence, read N- to C-terminus: Probable receptor-like protein kinase At5g39020 (813 aa).

The signal sequence occupies residues Met-1–Ala-21. The Extracellular segment spans residues Ala-22 to Val-437. 10 N-linked (GlcNAc...) asparagine glycosylation sites follow: Asn-46, Asn-61, Asn-165, Asn-202, Asn-213, Asn-263, Asn-286, Asn-293, Asn-384, and Asn-401. Residues Leu-438–Ile-458 form a helical membrane-spanning segment. At Met-459–Ile-813 the chain is on the cytoplasmic side. The Protein kinase domain occupies Lys-496–Leu-771. ATP-binding positions include Val-502–Val-510 and Lys-524. Asp-619 functions as the Proton acceptor in the catalytic mechanism. The tract at residues Glu-791–Ile-813 is disordered. Residues Gln-804 to Ile-813 are compositionally biased toward polar residues.

Belongs to the protein kinase superfamily. Ser/Thr protein kinase family.

The protein localises to the membrane. The protein is Probable receptor-like protein kinase At5g39020 of Arabidopsis thaliana (Mouse-ear cress).